We begin with the raw amino-acid sequence, 355 residues long: Tryptophan--tRNA ligase (355 aa).

Residues 13–15 and 21–22 contribute to the ATP site; these read QPT and GN. The short motif at 14–22 is the 'HIGH' region element; that stretch reads PTGNLHLGN. Aspartate 137 is an L-tryptophan binding site. ATP contacts are provided by residues 149–151, isoleucine 208, and 217–221; these read GED and KMSKS. The 'KMSKS' region motif lies at 217–221; the sequence is KMSKS.

It belongs to the class-I aminoacyl-tRNA synthetase family. Homodimer.

The protein resides in the cytoplasm. It catalyses the reaction tRNA(Trp) + L-tryptophan + ATP = L-tryptophyl-tRNA(Trp) + AMP + diphosphate + H(+). Catalyzes the attachment of tryptophan to tRNA(Trp). In Mesorhizobium japonicum (strain LMG 29417 / CECT 9101 / MAFF 303099) (Mesorhizobium loti (strain MAFF 303099)), this protein is Tryptophan--tRNA ligase.